A 387-amino-acid polypeptide reads, in one-letter code: Chaperone protein DnaJ (387 aa).

Residues 6–70 form the J domain; sequence DYYETLGVSR…QKRAAYDQYG (65 aa). The segment at 143–225 adopts a CR-type zinc-finger fold; it reads GKDTKISYDR…CHGTGHEQER (83 aa). Zn(2+) is bound by residues C156, C159, C173, C176, C199, C202, C213, and C216. 4 CXXCXGXG motif repeats span residues 156-163, 173-180, 199-206, and 213-220; these read CHTCNGSG, CHKCHGSG, CDVCGGTG, and CPTCHGTG.

This sequence belongs to the DnaJ family. As to quaternary structure, homodimer. Requires Zn(2+) as cofactor.

It is found in the cytoplasm. Participates actively in the response to hyperosmotic and heat shock by preventing the aggregation of stress-denatured proteins and by disaggregating proteins, also in an autonomous, DnaK-independent fashion. Unfolded proteins bind initially to DnaJ; upon interaction with the DnaJ-bound protein, DnaK hydrolyzes its bound ATP, resulting in the formation of a stable complex. GrpE releases ADP from DnaK; ATP binding to DnaK triggers the release of the substrate protein, thus completing the reaction cycle. Several rounds of ATP-dependent interactions between DnaJ, DnaK and GrpE are required for fully efficient folding. Also involved, together with DnaK and GrpE, in the DNA replication of plasmids through activation of initiation proteins. The sequence is that of Chaperone protein DnaJ from Lacticaseibacillus paracasei (strain ATCC 334 / BCRC 17002 / CCUG 31169 / CIP 107868 / KCTC 3260 / NRRL B-441) (Lactobacillus paracasei).